Reading from the N-terminus, the 379-residue chain is Alanine racemase (379 aa).

Residue Lys37 is the Proton acceptor; specific for D-alanine of the active site. Lys37 carries the N6-(pyridoxal phosphate)lysine modification. Position 137 (Arg137) interacts with substrate. The active-site Proton acceptor; specific for L-alanine is Tyr269. Met317 is a binding site for substrate.

The protein belongs to the alanine racemase family. It depends on pyridoxal 5'-phosphate as a cofactor.

The enzyme catalyses L-alanine = D-alanine. Its pathway is amino-acid biosynthesis; D-alanine biosynthesis; D-alanine from L-alanine: step 1/1. Its function is as follows. Catalyzes the interconversion of L-alanine and D-alanine. May also act on other amino acids. The polypeptide is Alanine racemase (alr) (Geobacter sp. (strain M21)).